The chain runs to 426 residues: Enolase (426 aa).

Gln163 provides a ligand contact to (2R)-2-phosphoglycerate. The active-site Proton donor is the Glu205. Asp242, Glu283, and Asp310 together coordinate Mg(2+). (2R)-2-phosphoglycerate-binding residues include Lys335, Arg364, Ser365, and Lys386. The active-site Proton acceptor is the Lys335.

The protein belongs to the enolase family. The cofactor is Mg(2+).

It is found in the cytoplasm. It localises to the secreted. Its subcellular location is the cell surface. The catalysed reaction is (2R)-2-phosphoglycerate = phosphoenolpyruvate + H2O. Its pathway is carbohydrate degradation; glycolysis; pyruvate from D-glyceraldehyde 3-phosphate: step 4/5. In terms of biological role, catalyzes the reversible conversion of 2-phosphoglycerate (2-PG) into phosphoenolpyruvate (PEP). It is essential for the degradation of carbohydrates via glycolysis. In Beutenbergia cavernae (strain ATCC BAA-8 / DSM 12333 / CCUG 43141 / JCM 11478 / NBRC 16432 / NCIMB 13614 / HKI 0122), this protein is Enolase.